A 228-amino-acid chain; its full sequence is L-ribulose-5-phosphate 4-epimerase UlaF (228 aa).

Substrate is bound by residues 26-27 (GN), 43-44 (SG), and 72-73 (SS). Zn(2+) is bound by residues Asp-74, His-93, and His-95. Asp-118 functions as the Proton donor/acceptor in the catalytic mechanism. His-167 provides a ligand contact to Zn(2+). The active-site Proton donor/acceptor is the Tyr-225.

This sequence belongs to the aldolase class II family. AraD/FucA subfamily. It depends on Zn(2+) as a cofactor.

The catalysed reaction is L-ribulose 5-phosphate = D-xylulose 5-phosphate. Its pathway is cofactor degradation; L-ascorbate degradation; D-xylulose 5-phosphate from L-ascorbate: step 4/4. In terms of biological role, catalyzes the isomerization of L-ribulose 5-phosphate to D-xylulose 5-phosphate. Is involved in the anaerobic L-ascorbate utilization. The sequence is that of L-ribulose-5-phosphate 4-epimerase UlaF from Salmonella paratyphi B (strain ATCC BAA-1250 / SPB7).